The chain runs to 202 residues: Thymidine kinase (202 aa).

ATP contacts are provided by residues 16 to 23 and 99 to 102; these read GPMFSGKS and DEVQ. E100 serves as the catalytic Proton acceptor. Residues C156, C159, C194, and H197 each coordinate Zn(2+).

The protein belongs to the thymidine kinase family. In terms of assembly, homotetramer.

Its subcellular location is the cytoplasm. It carries out the reaction thymidine + ATP = dTMP + ADP + H(+). In Deinococcus deserti (strain DSM 17065 / CIP 109153 / LMG 22923 / VCD115), this protein is Thymidine kinase.